Consider the following 118-residue polypeptide: Large ribosomal subunit protein bL19 (118 aa).

The protein belongs to the bacterial ribosomal protein bL19 family.

This protein is located at the 30S-50S ribosomal subunit interface and may play a role in the structure and function of the aminoacyl-tRNA binding site. This Onion yellows phytoplasma (strain OY-M) protein is Large ribosomal subunit protein bL19.